A 306-amino-acid polypeptide reads, in one-letter code: D-alanine--D-alanine ligase (306 aa).

One can recognise an ATP-grasp domain in the interval 102 to 300 (KIIAASAGVS…YGDIVKWIVE (199 aa)). Position 128–183 (128–183 (PMKPPYVIKPIREGSSFGVVIVGSDETMPLHDIMNNEWVYDDEIMVEKYVPGRELT)) interacts with ATP. Mg(2+) contacts are provided by D253, E267, and N269.

It belongs to the D-alanine--D-alanine ligase family. Mg(2+) serves as cofactor. It depends on Mn(2+) as a cofactor.

The protein localises to the cytoplasm. It catalyses the reaction 2 D-alanine + ATP = D-alanyl-D-alanine + ADP + phosphate + H(+). It functions in the pathway cell wall biogenesis; peptidoglycan biosynthesis. In terms of biological role, cell wall formation. This is D-alanine--D-alanine ligase from Bartonella bacilliformis (strain ATCC 35685 / KC583 / Herrer 020/F12,63).